The chain runs to 305 residues: Oligopeptide transport system permease protein OppC (305 aa).

6 helical membrane passes run 43 to 63, 105 to 125, 166 to 185, 212 to 232, 236 to 256, and 274 to 294; these read AMVGLIIIVLIILMAIFAPMF, ISIFIGVAAAVLDLLIGVIWG, LFTIIIAMTITGWINMARIV, LFKHIVPNAMGSILVTMTLTV, IFTEAFLSYLGLGVPAPLASW, and LFFPAGFICITMFGFNVVGDG. The 190-residue stretch at 103-292 folds into the ABC transmembrane type-1 domain; the sequence is ARISIFIGVA…ITMFGFNVVG (190 aa).

This sequence belongs to the binding-protein-dependent transport system permease family. OppBC subfamily. The complex is composed of two ATP-binding proteins (OppD and OppF), two transmembrane proteins (OppB and OppC) and a solute-binding protein (OppA).

It is found in the cell membrane. Part of the ABC transporter complex OppABCDF involved in the uptake of oligopeptides. Probably responsible for the translocation of the substrate across the membrane. Required for sporulation and genetic competence. This Bacillus subtilis (strain 168) protein is Oligopeptide transport system permease protein OppC.